Reading from the N-terminus, the 205-residue chain is Imidazoleglycerol-phosphate dehydratase (205 aa).

The tract at residues 1–27 (MKQASPRAGGAKARRGQVARKTKETDV) is disordered.

It belongs to the imidazoleglycerol-phosphate dehydratase family.

It localises to the cytoplasm. It carries out the reaction D-erythro-1-(imidazol-4-yl)glycerol 3-phosphate = 3-(imidazol-4-yl)-2-oxopropyl phosphate + H2O. Its pathway is amino-acid biosynthesis; L-histidine biosynthesis; L-histidine from 5-phospho-alpha-D-ribose 1-diphosphate: step 6/9. This chain is Imidazoleglycerol-phosphate dehydratase, found in Anaeromyxobacter sp. (strain Fw109-5).